We begin with the raw amino-acid sequence, 400 residues long: DNA polymerase IV (400 aa).

The UmuC domain maps to 5–187 (IFLVDMNAFF…LPVEFMNGIG (183 aa)). Residues Asp9 and Asp105 each coordinate Mg(2+). The active site involves Glu106.

It belongs to the DNA polymerase type-Y family. As to quaternary structure, monomer. Mg(2+) serves as cofactor.

The protein resides in the cytoplasm. It carries out the reaction DNA(n) + a 2'-deoxyribonucleoside 5'-triphosphate = DNA(n+1) + diphosphate. Its function is as follows. Poorly processive, error-prone DNA polymerase involved in untargeted mutagenesis. Copies undamaged DNA at stalled replication forks, which arise in vivo from mismatched or misaligned primer ends. These misaligned primers can be extended by PolIV. Exhibits no 3'-5' exonuclease (proofreading) activity. May be involved in translesional synthesis, in conjunction with the beta clamp from PolIII. This is DNA polymerase IV from Clostridium kluyveri (strain ATCC 8527 / DSM 555 / NBRC 12016 / NCIMB 10680 / K1).